We begin with the raw amino-acid sequence, 399 residues long: N-acetylglucosamine-6-phosphate deacetylase (399 aa).

A divalent metal cation-binding residues include His-65, His-67, and Glu-135. 146 to 147 (AH) is a substrate binding site. Positions 201 and 222 each coordinate a divalent metal cation. Substrate contacts are provided by residues 225–226 (NG), Arg-233, and 254–257 (DGHH). Asp-279 serves as a coordination point for a divalent metal cation. Asp-279 serves as the catalytic Proton donor/acceptor. 312-314 (LAG) is a binding site for substrate.

This sequence belongs to the metallo-dependent hydrolases superfamily. NagA family. In terms of assembly, homodimer. A divalent metal cation serves as cofactor.

It carries out the reaction N-acetyl-D-glucosamine 6-phosphate + H2O = D-glucosamine 6-phosphate + acetate. It participates in amino-sugar metabolism; N-acetylneuraminate degradation; D-fructose 6-phosphate from N-acetylneuraminate: step 4/5. Involved in the first committed step in the biosynthesis of amino-sugar-nucleotides. Catalyzes the hydrolysis of the N-acetyl group of N-acetylglucosamine-6-phosphate (GlcNAc-6-P) to yield glucosamine 6-phosphate and acetate. In Vibrio furnissii, this protein is N-acetylglucosamine-6-phosphate deacetylase (manD).